Reading from the N-terminus, the 155-residue chain is Ribosomal RNA large subunit methyltransferase H (155 aa).

S-adenosyl-L-methionine is bound by residues leucine 72, glycine 104, and leucine 123–leucine 128.

It belongs to the RNA methyltransferase RlmH family. As to quaternary structure, homodimer.

The protein localises to the cytoplasm. It carries out the reaction pseudouridine(1915) in 23S rRNA + S-adenosyl-L-methionine = N(3)-methylpseudouridine(1915) in 23S rRNA + S-adenosyl-L-homocysteine + H(+). Functionally, specifically methylates the pseudouridine at position 1915 (m3Psi1915) in 23S rRNA. The sequence is that of Ribosomal RNA large subunit methyltransferase H from Mycoplasma mycoides subsp. mycoides SC (strain CCUG 32753 / NCTC 10114 / PG1).